Here is a 608-residue protein sequence, read N- to C-terminus: Bifunctional dihydrofolate reductase-thymidylate synthase (608 aa).

One can recognise a DHFR domain in the interval 10–228 (DIYAICACCK…TTLDFIIYKK (219 aa)). 14-15 (IC) is a binding site for substrate. A16 contacts NADP(+). V31 provides a ligand contact to substrate. Position 39–45 (39–45 (GLGNKGV)) interacts with NADP(+). D54 and N108 together coordinate substrate. NADP(+)-binding positions include 106 to 108 (RTN), 128 to 130 (SRT), and N144. 3 residues coordinate substrate: I164, Y170, and T185. 165-172 (GGSVVYQE) contacts NADP(+). Residues 322–608 (YHPEYQYLNI…HEKISMDMAA (287 aa)) are thymidylate synthase. R345 contacts dUMP. The active site involves C490. DUMP contacts are provided by residues H491, 509-513 (QRSCD), N521, and 551-553 (HVY).

It in the N-terminal section; belongs to the dihydrofolate reductase family. In the C-terminal section; belongs to the thymidylate synthase family. As to quaternary structure, homodimer.

The catalysed reaction is (6S)-5,6,7,8-tetrahydrofolate + NADP(+) = 7,8-dihydrofolate + NADPH + H(+). It carries out the reaction dUMP + (6R)-5,10-methylene-5,6,7,8-tetrahydrofolate = 7,8-dihydrofolate + dTMP. Its pathway is cofactor biosynthesis; tetrahydrofolate biosynthesis; 5,6,7,8-tetrahydrofolate from 7,8-dihydrofolate: step 1/1. Bifunctional enzyme. Involved in de novo dTMP biosynthesis. Key enzyme in folate metabolism. Catalyzes an essential reaction for de novo glycine and purine synthesis, DNA precursor synthesis, and for the conversion of dUMP to dTMP. This is Bifunctional dihydrofolate reductase-thymidylate synthase from Plasmodium falciparum (isolate K1 / Thailand).